Reading from the N-terminus, the 119-residue chain is HTH-type transcriptional regulator SarX (119 aa).

A DNA-binding region (H-T-H motif) is located at residues 55–78; sequence LKTAMDELDLSRTKLLVSIRRLIE.

This sequence belongs to the SarA family.

The protein localises to the cytoplasm. Involved in the regulation of virulence genes. Acts as a repressor of the agr locus and consequently targets genes regulated by the agr system such as sspA, hla and hlb. Binds directly to the agr promoter region. The sequence is that of HTH-type transcriptional regulator SarX (sarX) from Staphylococcus aureus (strain bovine RF122 / ET3-1).